The following is a 1234-amino-acid chain: ATP-dependent helicase/nuclease subunit A (1234 aa).

Residues 9-482 (STWTDDQWEA…IDLNKNFRSR (474 aa)) form the UvrD-like helicase ATP-binding domain. Residue 30 to 37 (AAAGSGKT) participates in ATP binding. The region spanning 509–800 (QAELKLGASY…RMMTIHSSKG (292 aa)) is the UvrD-like helicase C-terminal domain.

The protein belongs to the helicase family. AddA subfamily. As to quaternary structure, heterodimer of AddA and AddB/RexB. It depends on Mg(2+) as a cofactor.

The catalysed reaction is Couples ATP hydrolysis with the unwinding of duplex DNA by translocating in the 3'-5' direction.. The enzyme catalyses ATP + H2O = ADP + phosphate + H(+). In terms of biological role, the heterodimer acts as both an ATP-dependent DNA helicase and an ATP-dependent, dual-direction single-stranded exonuclease. Recognizes the chi site generating a DNA molecule suitable for the initiation of homologous recombination. The AddA nuclease domain is required for chi fragment generation; this subunit has the helicase and 3' -&gt; 5' nuclease activities. This is ATP-dependent helicase/nuclease subunit A from Bacillus pumilus (strain SAFR-032).